Reading from the N-terminus, the 120-residue chain is Large ribosomal subunit protein bL17 (120 aa).

Belongs to the bacterial ribosomal protein bL17 family. In terms of assembly, part of the 50S ribosomal subunit. Contacts protein L32.

The protein is Large ribosomal subunit protein bL17 of Bacillus velezensis (strain DSM 23117 / BGSC 10A6 / LMG 26770 / FZB42) (Bacillus amyloliquefaciens subsp. plantarum).